Consider the following 124-residue polypeptide: Single-stranded DNA-binding protein (124 aa).

This sequence belongs to the phi29likevirus single-strand-binding protein family. As to quaternary structure, monomer.

Functionally, single-stranded DNA binding protein required for the elongation during viral DNA replication by strand displacement. Displaced viral DNA strands are transiently coated with the ssDNA-binding protein and therefore protected against nucleases. The latter is then probably removed by the replisome that performs lagging strand synthesis or during the events that lead up to the recombination process. Stimulates in vitro DNA replication several fold. Has helix-destabilizing activity since it removes secondary structure from the ssDNA in replicative intermediates. The chain is Single-stranded DNA-binding protein (5) from Bacillus subtilis (Bacteriophage phi-29).